A 408-amino-acid chain; its full sequence is Endo-1,4-beta-xylanase A (408 aa).

The first 19 residues, 1–19 (MKLSASFAALALLLPFVQA), serve as a signal peptide directing secretion. In terms of domain architecture, CBM1 spans 20 to 55 (QSPVWGQCGGIGWTGPTTCTAGNVCQEYSAYYSQCI). The disordered stretch occupies residues 64–89 (TSVSTAPNPPPTSHTSTSSAPSGAST). Over residues 76-89 (SHTSTSSAPSGAST) the composition is skewed to low complexity. Positions 88–405 (STSTAKLNTL…KPAYDGIAIG (318 aa)) constitute a GH10 domain. Catalysis depends on E222, which acts as the Proton donor. E327 acts as the Nucleophile in catalysis. A disulfide bridge connects residues C355 and C361.

This sequence belongs to the glycosyl hydrolase 10 (cellulase F) family.

It localises to the secreted. The enzyme catalyses Endohydrolysis of (1-&gt;4)-beta-D-xylosidic linkages in xylans.. It participates in glycan degradation; xylan degradation. Its function is as follows. Endo-1,4-beta-xylanase involved in the hydrolysis of xylan, a major structural heterogeneous polysaccharide found in plant biomass representing the second most abundant polysaccharide in the biosphere, after cellulose. The protein is Endo-1,4-beta-xylanase A (xynA) of Phanerodontia chrysosporium (White-rot fungus).